The primary structure comprises 379 residues: MEQLSTANTHFAVDLFRALNESDPTGNIFISPLSISSALAMIFLGTRGNTAAQVSKALYFDTVEDIHSRFQSLNADINKPGAPYILKLANRLYGEKTYNFLADFLASTQKMYGAELASVDFQQAPEDARKEINEWVKGQTEGKIPELLVKGMVDNMTKLVLVNAIYFKGNWQEKFMKEATRDAPFRLNKKDTKTVKMMYQKKKFPYNYIEDLKCRVLELPYQGKELSMIILLPDDIEDESTGLEKIEKQLTLEKLREWTKPENLYLAEVNVHLPRFKLEESYDLTSHLARLGVQDLFNRGKADLSGMSGARDLFVSKIIHKSFVDLNEEGTEAAAATAGTIMLAMLMPEENFNADHPFIFFIRHNPSANILFLGRFSSP.

Position 1 is an N-acetylmethionine (Met1). Residues Lys137 and Lys177 each carry the N6-acetyllysine modification. Positions 351-379 are CARD-binding motif (CBM); that stretch reads NFNADHPFIFFIRHNPSANILFLGRFSSP.

This sequence belongs to the serpin family. Ov-serpin subfamily. Monomer. Interacts (via C-terminus) with CASP1; CASP4 (via CARD domain) and CASP5; these interactions regulate the activity of inflammatory caspases. Interacts with PRTN3. Interacts with GZMH. Interacts with TMSB4. Post-translationally, the N-terminus is blocked.

The protein localises to the secreted. The protein resides in the cytoplasm. It localises to the cytolytic granule. Its subcellular location is the early endosome. Neutrophil serine protease inhibitor that plays an essential role in the regulation of the innate immune response, inflammation and cellular homeostasis. Acts primarily to protect the cell from proteases released in the cytoplasm during stress or infection. These proteases are important in killing microbes but when released from granules, these potent enzymes also destroy host proteins and contribute to mortality. Regulates the activity of the neutrophil proteases elastase, cathepsin G, proteinase-3, chymase, chymotrypsin, and kallikrein-3. Also acts as a potent intracellular inhibitor of GZMH by directly blocking its proteolytic activity. During inflammation, limits the activity of inflammatory caspases CASP1, CASP4 and CASP5 by suppressing their caspase-recruitment domain (CARD) oligomerization and enzymatic activation. When secreted, promotes the proliferation of beta-cells via its protease inhibitory function. This chain is Leukocyte elastase inhibitor (SERPINB1), found in Equus caballus (Horse).